The chain runs to 65 residues: Putative beta-neurotoxin RjAa4 (65 aa).

An LCN-type CS-alpha/beta domain is found at 1–64 (KEGYPMGRDG…VWDSSTNKCG (64 aa)). Disulfide bonds link C11–C63, C15–C37, C22–C44, and C26–C46.

The protein belongs to the long (4 C-C) scorpion toxin superfamily. Sodium channel inhibitor family. Beta subfamily. As to expression, expressed by the venom gland.

The protein resides in the secreted. In terms of biological role, beta toxins bind voltage-independently at site-4 of sodium channels (Nav) and shift the voltage of activation toward more negative potentials thereby affecting sodium channel activation and promoting spontaneous and repetitive firing. In Rhopalurus junceus (Caribbean blue scorpion), this protein is Putative beta-neurotoxin RjAa4.